We begin with the raw amino-acid sequence, 211 residues long: Large ribosomal subunit protein bL25 (211 aa).

This sequence belongs to the bacterial ribosomal protein bL25 family. CTC subfamily. As to quaternary structure, part of the 50S ribosomal subunit; part of the 5S rRNA/L5/L18/L25 subcomplex. Contacts the 5S rRNA. Binds to the 5S rRNA independently of L5 and L18.

Its function is as follows. This is one of the proteins that binds to the 5S RNA in the ribosome where it forms part of the central protuberance. In Methylobacterium nodulans (strain LMG 21967 / CNCM I-2342 / ORS 2060), this protein is Large ribosomal subunit protein bL25.